The chain runs to 272 residues: Shikimate dehydrogenase (NADP(+)) (272 aa).

Shikimate-binding positions include 14–16 (SKS) and T61. The Proton acceptor role is filled by K65. E77 serves as a coordination point for NADP(+). Residues N86 and D102 each coordinate shikimate. Residues 126 to 130 (GAGGA), 149 to 154 (NRTVSR), and M213 contribute to the NADP(+) site. Residue Y215 participates in shikimate binding. G237 is a binding site for NADP(+).

Belongs to the shikimate dehydrogenase family. In terms of assembly, homodimer.

The enzyme catalyses shikimate + NADP(+) = 3-dehydroshikimate + NADPH + H(+). Its pathway is metabolic intermediate biosynthesis; chorismate biosynthesis; chorismate from D-erythrose 4-phosphate and phosphoenolpyruvate: step 4/7. Involved in the biosynthesis of the chorismate, which leads to the biosynthesis of aromatic amino acids. Catalyzes the reversible NADPH linked reduction of 3-dehydroshikimate (DHSA) to yield shikimate (SA). The sequence is that of Shikimate dehydrogenase (NADP(+)) from Escherichia coli O7:K1 (strain IAI39 / ExPEC).